Here is a 209-residue protein sequence, read N- to C-terminus: Cytidylate kinase (209 aa).

7–15 (GVAASGKSS) contributes to the ATP binding site.

Belongs to the cytidylate kinase family. Type 1 subfamily.

Its subcellular location is the cytoplasm. It carries out the reaction CMP + ATP = CDP + ADP. It catalyses the reaction dCMP + ATP = dCDP + ADP. The sequence is that of Cytidylate kinase from Deinococcus geothermalis (strain DSM 11300 / CIP 105573 / AG-3a).